We begin with the raw amino-acid sequence, 215 residues long: Cytochrome b6 (215 aa).

The helical transmembrane segment at 32-52 (IFYCLGGITFTCFLLQVASGF) threads the bilayer. C35 serves as a coordination point for heme c. Heme b contacts are provided by H86 and H100. Helical transmembrane passes span 90 to 110 (ASMMVLTMILHVFRVYLTGGF), 116 to 136 (LTWVTGVILAVLTVSFGVTGY), and 186 to 206 (LHTFILPLLTAVFMLMHFLMI). 2 residues coordinate heme b: H187 and H202.

The protein belongs to the cytochrome b family. PetB subfamily. In terms of assembly, the 4 large subunits of the cytochrome b6-f complex are cytochrome b6, subunit IV (17 kDa polypeptide, PetD), cytochrome f and the Rieske protein, while the 4 small subunits are PetG, PetL, PetM and PetN. The complex functions as a dimer. The cofactor is heme b. Requires heme c as cofactor.

The protein localises to the plastid. Its subcellular location is the chloroplast thylakoid membrane. In terms of biological role, component of the cytochrome b6-f complex, which mediates electron transfer between photosystem II (PSII) and photosystem I (PSI), cyclic electron flow around PSI, and state transitions. In Coleochaete orbicularis (Charophycean green alga), this protein is Cytochrome b6.